The sequence spans 308 residues: Oligopeptide transport ATP-binding protein OppF (308 aa).

Residues 9-254 enclose the ABC transporter domain; the sequence is VEVKNVSLTF…PIHPYTQSLL (246 aa). 46-53 contributes to the ATP binding site; it reads GESGSGKT.

It belongs to the ABC transporter superfamily. The complex is composed of two ATP-binding proteins (OppD and OppF), two transmembrane proteins (OppB and OppC) and a solute-binding protein (OppA).

Its subcellular location is the cell membrane. It catalyses the reaction a [peptide](out) + ATP + H2O = a [peptide](in) + ADP + phosphate + H(+). Its function is as follows. Part of the ABC transporter complex OppABCDF involved in the uptake of oligopeptides. Probably responsible for energy coupling to the transport system. This chain is Oligopeptide transport ATP-binding protein OppF (oppF), found in Streptococcus mutans serotype c (strain ATCC 700610 / UA159).